The primary structure comprises 297 residues: Cyclin-dependent kinase 1 (297 aa).

A Protein kinase domain is found at 4–287; sequence FEKIEKIGEG…AKDILEHPYF (284 aa). ATP is bound by residues 10-18 and Lys33; that span reads IGEGTYGVV. Residue Thr14 is modified to Phosphothreonine. The residue at position 15 (Tyr15) is a Phosphotyrosine. The Proton acceptor role is filled by Asp128. Tyr160 carries the post-translational modification Phosphotyrosine. Thr161 carries the phosphothreonine; by CAK modification.

Belongs to the protein kinase superfamily. CMGC Ser/Thr protein kinase family. CDC2/CDKX subfamily. Forms a stable but non-covalent complex with a regulatory subunit and with a cyclin. Component of the Frs-CycA-Cdk1 complex composed of Cdk1, CycA and Z600.

The protein resides in the nucleus. It catalyses the reaction L-seryl-[protein] + ATP = O-phospho-L-seryl-[protein] + ADP + H(+). The catalysed reaction is L-threonyl-[protein] + ATP = O-phospho-L-threonyl-[protein] + ADP + H(+). It carries out the reaction [DNA-directed RNA polymerase] + ATP = phospho-[DNA-directed RNA polymerase] + ADP + H(+). Phosphorylation at Thr-14 or Tyr-15 inactivates the enzyme, while phosphorylation at Thr-161 activates it. In terms of biological role, plays a key role in the control of the eukaryotic cell cycle. Required for entry into S-phase and mitosis. In embryos, promotes the release of Rif1 from chromatin during mid-blastula transition. p34 is a component of the kinase complex that phosphorylates the repetitive C-terminus of RNA polymerase II. This Drosophila melanogaster (Fruit fly) protein is Cyclin-dependent kinase 1.